We begin with the raw amino-acid sequence, 256 residues long: Ribonuclease T2 (256 aa).

The N-terminal stretch at 1-24 (MRPAALRGALLGCLCLALLCLGGA) is a signal peptide. Cys48 and Cys55 are oxidised to a cystine. Residue His65 is part of the active site. Disulfide bonds link Cys75–Cys121, Cys184–Cys241, and Cys202–Cys213. 2 N-linked (GlcNAc...) asparagine glycosylation sites follow: Asn76 and Asn106. Catalysis depends on residues Glu114 and His118. The N-linked (GlcNAc...) asparagine glycan is linked to Asn212.

This sequence belongs to the RNase T2 family. In terms of tissue distribution, ubiquitous. Higher expression levels observed in the temporal lobe and fetal brain.

It is found in the secreted. The protein localises to the lysosome lumen. Its subcellular location is the endoplasmic reticulum lumen. It localises to the mitochondrion intermembrane space. It carries out the reaction a ribonucleotidyl-ribonucleotide-RNA + H2O = a 3'-end 3'-phospho-ribonucleotide-RNA + a 5'-end dephospho-ribonucleoside-RNA + H(+). It catalyses the reaction an adenylyl-uridine-RNA = a 3'-end 2',3'-cyclophospho-AMP-RNA + a 5'-end dephospho-uridine-RNA. The catalysed reaction is a guanylyl-uridine-RNA = a 3'-end 2',3'-cyclophospho-GMP-RNA + a 5'-end dephospho-uridine-RNA. Its activity is regulated as follows. Inhibited by Zn(2+) and Cu(2+). Functionally, ribonuclease that plays an essential role in innate immune response by recognizing and degrading RNAs from microbial pathogens that are subsequently sensed by TLR8. Cleaves preferentially single-stranded RNA molecules between purine and uridine residues, which critically contributes to the supply of catabolic uridine and the generation of purine-2',3'-cyclophosphate-terminated oligoribonucleotides. In turn, RNase T2 degradation products promote the RNA-dependent activation of TLR8. In plasmacytoid dendritic cells, it cooperates with PLD3 or PLD4 5'-&gt;3' exonucleases to process RNA fragments and release 2',3'-cyclic guanosine monophosphate (2',3'-cGMP), a potent stimulatory ligand for TLR7. Also plays a key role in degradation of mitochondrial RNA and processing of non-coding RNA imported from the cytosol into mitochondria. Participates as well in degradation of mitochondrion-associated cytosolic rRNAs. In Homo sapiens (Human), this protein is Ribonuclease T2 (RNASET2).